Consider the following 105-residue polypeptide: MRGGGNMQQMMKQMQKMQKKMAEEQEKLKDEKVEGSAGGGMVKVVVTGHKEVVDVVIDEEAVDPDDVEMLQDLVLAATNEAMNKADELTSERLGKHTKGLNIPGM.

Residues 1–36 (MRGGGNMQQMMKQMQKMQKKMAEEQEKLKDEKVEGS) form a disordered region. A compositionally biased stretch (low complexity) spans 7 to 16 (MQQMMKQMQK). A compositionally biased stretch (basic and acidic residues) spans 20-34 (KMAEEQEKLKDEKVE).

The protein belongs to the YbaB/EbfC family. Homodimer.

It is found in the cytoplasm. Its subcellular location is the nucleoid. In terms of biological role, binds to DNA and alters its conformation. May be involved in regulation of gene expression, nucleoid organization and DNA protection. This chain is Nucleoid-associated protein Sca_0120, found in Staphylococcus carnosus (strain TM300).